The primary structure comprises 144 residues: Large ribosomal subunit protein uL15 (144 aa).

Residues 1–58 (MHLNTLSPAPGSHKARKRCGRGIGSGIGKTGGRGHKGQKSRSGGSVRPGFEGGQMPLK) are disordered. Gly residues predominate over residues 21-31 (RGIGSGIGKTG).

It belongs to the universal ribosomal protein uL15 family. As to quaternary structure, part of the 50S ribosomal subunit.

Binds to the 23S rRNA. In Colwellia psychrerythraea (strain 34H / ATCC BAA-681) (Vibrio psychroerythus), this protein is Large ribosomal subunit protein uL15.